We begin with the raw amino-acid sequence, 317 residues long: SWI/SNF-related matrix-associated actin-dependent regulator of chromatin subfamily E member 1-related (317 aa).

A compositionally biased stretch (low complexity) spans 1–17 (MSHGPKQPGAAAAPAGG). The interval 1 to 71 (MSHGPKQPGA…RKKILPNGPK (71 aa)) is disordered. A Glycyl lysine isopeptide (Lys-Gly) (interchain with G-Cter in SUMO2) cross-link involves residue K31. The segment covering 31–52 (KQERGEGPRAGEKGSHEEEPVK) has biased composition (basic and acidic residues). Residues 53-65 (KRGWPKGKKRKKI) are compositionally biased toward basic residues. The segment at residues 70 to 138 (PKAPVTGYVR…QYMKELRAYQ (69 aa)) is a DNA-binding region (HMG box). S160 is modified (phosphoserine). A coiled-coil region spans residues 190–257 (EEFLDQNKAR…LQQQLQAVRQ (68 aa)).

As to quaternary structure, component of a BHC histone deacetylase complex that contains HDAC1, HDAC2, HMG20B/BRAF35, KDM1A, RCOR1/CoREST and PHF21A/BHC80. The BHC complex may also contain ZMYM2, ZNF217, ZMYM3, GSE1 and GTF2I. Interacts with the BRCA2 tumor suppressor protein. Interacts with DTNB. As to expression, ubiquitously expressed in adult tissues.

Its subcellular location is the nucleus. It localises to the chromosome. In terms of biological role, required for correct progression through G2 phase of the cell cycle and entry into mitosis. Required for RCOR1/CoREST mediated repression of neuronal specific gene promoters. This chain is SWI/SNF-related matrix-associated actin-dependent regulator of chromatin subfamily E member 1-related (HMG20B), found in Homo sapiens (Human).